A 473-amino-acid chain; its full sequence is Calcium/calmodulin-dependent protein kinase type IV (473 aa).

Residues S12 and S13 each carry the phosphoserine; by autocatalysis modification. The 255-residue stretch at 46–300 (FEVESELGRG…TFQALQHPWV (255 aa)) folds into the Protein kinase domain. Residues 52 to 60 (LGRGATSIV) and K75 contribute to the ATP site. T57 carries O-linked (GlcNAc) threonine glycosylation. O-linked (GlcNAc) serine glycosylation is present at S58. The O-linked (GlcNAc) serine glycan is linked to S137. D164 acts as the Proton acceptor in catalysis. A glycan (O-linked (GlcNAc) serine) is linked at S189. Residue T200 is modified to Phosphothreonine; by CaMKK1 and CaMKK2. The autoinhibitory domain stretch occupies residues 305–321 (ANFVHMDTAQKKLQEFN). Residues 306-323 (NFVHMDTAQKKLQEFNAR) form a PP2A-binding region. A calmodulin-binding region spans residues 322 to 341 (ARRKLKAAVKAVVASSRLGS). S336 is subject to Phosphoserine; by autocatalysis. S341 bears the Phosphoserine mark. Positions 341 to 350 (SASSSHGSIQ) are enriched in low complexity. Disordered stretches follow at residues 341–368 (SASSSHGSIQESHKASRDPSPIQDGNED) and 445–473 (EEAAAPREGQGSSAVGFEVPQQDVILPEY). Residues S344, S345, and S356 are each glycosylated (O-linked (GlcNAc) serine). S360 bears the Phosphoserine mark.

This sequence belongs to the protein kinase superfamily. CAMK Ser/Thr protein kinase family. CaMK subfamily. As to quaternary structure, monomer. Interacts with protein phosphatase 2A (PPP2CA/PPP2CB); the interaction is mutually exclusive with binding to Ca(2+)/calmodulin. Post-translationally, phosphorylated by CaMKK1 and CaMKK2 on Thr-200. Dephosphorylated by protein phosphatase 2A. Autophosphorylated on Ser-12 and Ser-13. In terms of processing, glycosylation at Ser-189 modulates the phosphorylation of CaMK4 at Thr-200 and negatively regulates its activity toward CREB1 in basal conditions and during early inomycin stimulation. Expressed in brain, thymus, CD4 T-cells, testis and epithelial ovarian cancer tissue.

It is found in the cytoplasm. The protein localises to the nucleus. The catalysed reaction is L-seryl-[protein] + ATP = O-phospho-L-seryl-[protein] + ADP + H(+). It carries out the reaction L-threonyl-[protein] + ATP = O-phospho-L-threonyl-[protein] + ADP + H(+). Activated by Ca(2+)/calmodulin. Binding of calmodulin results in conformational change that relieves intrasteric autoinhibition and allows phosphorylation of Thr-200 within the activation loop by CaMKK1 or CaMKK2. Phosphorylation of Thr-200 results in a 10-20-fold increase in total activity to generate Ca(2+)/calmodulin-independent activity. Autophosphorylation of the N-terminus Ser-12 and Ser-13 is required for full activation. Inactivated by protein phosphatase 2A (PPP2CA/PPP2CB) which dephosphorylates Thr-200, thereby terminating autonomous activity and helping to maintain the enzyme in its autoinhibited state. Calcium/calmodulin-dependent protein kinase that operates in the calcium-triggered CaMKK-CaMK4 signaling cascade and regulates, mainly by phosphorylation, the activity of several transcription activators, such as CREB1, MEF2D, JUN and RORA, which play pivotal roles in immune response, inflammation, and memory consolidation. In the thymus, regulates the CD4(+)/CD8(+) double positive thymocytes selection threshold during T-cell ontogeny. In CD4 memory T-cells, is required to link T-cell antigen receptor (TCR) signaling to the production of IL2, IFNG and IL4 (through the regulation of CREB and MEF2). Regulates the differentiation and survival phases of osteoclasts and dendritic cells (DCs). Mediates DCs survival by linking TLR4 and the regulation of temporal expression of BCL2. Phosphorylates the transcription activator CREB1 on 'Ser-133' in hippocampal neuron nuclei and contribute to memory consolidation and long term potentiation (LTP) in the hippocampus. Can activate the MAP kinases MAPK1/ERK2, MAPK8/JNK1 and MAPK14/p38 and stimulate transcription through the phosphorylation of ELK1 and ATF2. Can also phosphorylate in vitro CREBBP, PRM2, MEF2A and STMN1/OP18. This is Calcium/calmodulin-dependent protein kinase type IV (CAMK4) from Homo sapiens (Human).